Reading from the N-terminus, the 117-residue chain is Ribosome-binding factor A (117 aa).

Belongs to the RbfA family. In terms of assembly, monomer. Binds 30S ribosomal subunits, but not 50S ribosomal subunits or 70S ribosomes.

The protein resides in the cytoplasm. Its function is as follows. One of several proteins that assist in the late maturation steps of the functional core of the 30S ribosomal subunit. Associates with free 30S ribosomal subunits (but not with 30S subunits that are part of 70S ribosomes or polysomes). Required for efficient processing of 16S rRNA. May interact with the 5'-terminal helix region of 16S rRNA. The chain is Ribosome-binding factor A from Nitrosomonas eutropha (strain DSM 101675 / C91 / Nm57).